The chain runs to 243 residues: Protein-L-isoaspartate O-methyltransferase (243 aa).

Residue serine 87 is part of the active site.

The protein belongs to the methyltransferase superfamily. L-isoaspartyl/D-aspartyl protein methyltransferase family.

Its subcellular location is the cytoplasm. It catalyses the reaction [protein]-L-isoaspartate + S-adenosyl-L-methionine = [protein]-L-isoaspartate alpha-methyl ester + S-adenosyl-L-homocysteine. In terms of biological role, catalyzes the methyl esterification of L-isoaspartyl residues in peptides and proteins that result from spontaneous decomposition of normal L-aspartyl and L-asparaginyl residues. It plays a role in the repair and/or degradation of damaged proteins. In Methanosarcina mazei (strain ATCC BAA-159 / DSM 3647 / Goe1 / Go1 / JCM 11833 / OCM 88) (Methanosarcina frisia), this protein is Protein-L-isoaspartate O-methyltransferase.